Consider the following 329-residue polypeptide: Secretory carrier-associated membrane protein 2 (329 aa).

2 disordered regions span residues 1-21 (MSAF…FQDP) and 51-72 (VTQL…PTQP). Residues 1–153 (MSAFDTNPFA…DYQRICKMLY (153 aa)) lie on the Cytoplasmic side of the membrane. The chain crosses the membrane as a helical span at residues 154 to 174 (YLWMLHSVTLFLNLLACLAWF). The Lumenal portion of the chain corresponds to 175–181 (SGNSSKG). Residues 182–202 (VDFGLSILWFLIFTPCAFLCW) form a helical membrane-spanning segment. The Cytoplasmic segment spans residues 203 to 218 (YRPIYKAFRSDNSFSF). Positions 203–218 (YRPIYKAFRSDNSFSF) are interaction with SLC9A7. A helical membrane pass occupies residues 219 to 239 (FVFFFVFFCQIGIYIIQLVGI). At 240–262 (PGLGDSGWIAALSTLDNHSLAIS) the chain is on the lumenal side. Residues 263–283 (VIMMVVAGFFTLCAVLSVFLL) form a helical membrane-spanning segment. Topologically, residues 284–329 (QRVHSLYRRTGASFQQAQEEFSQGIFSSRTFHRAASSAAQGAFQGN) are cytoplasmic. A phosphoserine mark is found at serine 319 and serine 320.

This sequence belongs to the SCAMP family. As to quaternary structure, interacts with SLC6A4 and SLC9A7. Interacts with SLC9A5; this interaction regulates SLC9A5 cell-surface targeting and SLC9A5 activity. Widely expressed.

Its subcellular location is the golgi apparatus. It is found in the trans-Golgi network membrane. The protein localises to the recycling endosome membrane. Functionally, functions in post-Golgi recycling pathways. Acts as a recycling carrier to the cell surface. This is Secretory carrier-associated membrane protein 2 (SCAMP2) from Homo sapiens (Human).